Here is a 136-residue protein sequence, read N- to C-terminus: Large ribosomal subunit protein uL16 (136 aa).

The protein belongs to the universal ribosomal protein uL16 family. In terms of assembly, part of the 50S ribosomal subunit.

Binds 23S rRNA and is also seen to make contacts with the A and possibly P site tRNAs. The sequence is that of Large ribosomal subunit protein uL16 from Vibrio campbellii (strain ATCC BAA-1116).